The chain runs to 392 residues: MPCSWKLLGFLSVHEPMPTAASFGIEMFNVTTQVLGSALNGTLSKDNCPDTEWWSWLNAIQAPFLWVLFLLAALENLFVLSVFFLHKNSCTVAEIYLGNLAAADLILACGLPFWAITIANNFDWVFGEVLCRVVNTMIYMNLYSSICFLMLVSIDRYLALVKTMSMGRMRGVRWAKLYSLVIWGCTLLLSSPMLVFRTMREYSEEGHNVTACVIVYPSRSWEVFTNVLLNLVGFLLPLSVITFCTVRILQVLRNNEMKKFKEVQTERKATVLVLAVLGLFVLCWVPFQISTFLDTLLRLGVLSGCWDEHAVDVITQISSYVAYSNSGLNPLVYVIVGKRFRKKSREVYRVLCQKGGCMGEPVQMENSMGTLRTSISVERQIHKLQDWAGKKQ.

Topologically, residues 1 to 61 (MPCSWKLLGF…EWWSWLNAIQ (61 aa)) are extracellular. N-linked (GlcNAc...) asparagine glycosylation is found at asparagine 29 and asparagine 40. Residues 62-85 (APFLWVLFLLAALENLFVLSVFFL) form a helical membrane-spanning segment. Topologically, residues 86–94 (HKNSCTVAE) are cytoplasmic. Residues 95–119 (IYLGNLAAADLILACGLPFWAITIA) traverse the membrane as a helical segment. Topologically, residues 120-132 (NNFDWVFGEVLCR) are extracellular. The cysteines at positions 131 and 212 are disulfide-linked. Residues 133–154 (VVNTMIYMNLYSSICFLMLVSI) form a helical membrane-spanning segment. Residues 155–176 (DRYLALVKTMSMGRMRGVRWAK) are Cytoplasmic-facing. Residue tyrosine 157 is modified to Phosphotyrosine. A helical transmembrane segment spans residues 177 to 199 (LYSLVIWGCTLLLSSPMLVFRTM). Topologically, residues 200–222 (REYSEEGHNVTACVIVYPSRSWE) are extracellular. Asparagine 208 is a glycosylation site (N-linked (GlcNAc...) asparagine). Residues 223 to 249 (VFTNVLLNLVGFLLPLSVITFCTVRIL) form a helical membrane-spanning segment. The Cytoplasmic portion of the chain corresponds to 250–268 (QVLRNNEMKKFKEVQTERK). The chain crosses the membrane as a helical span at residues 269 to 293 (ATVLVLAVLGLFVLCWVPFQISTFL). Residues 294-312 (DTLLRLGVLSGCWDEHAVD) are Extracellular-facing. The chain crosses the membrane as a helical span at residues 313-336 (VITQISSYVAYSNSGLNPLVYVIV). Over 337 to 392 (GKRFRKKSREVYRVLCQKGGCMGEPVQMENSMGTLRTSISVERQIHKLQDWAGKKQ) the chain is Cytoplasmic. Phosphotyrosine is present on tyrosine 348. A lipid anchor (S-palmitoyl cysteine) is attached at cysteine 352. Serine 367 is subject to Phosphoserine. Threonine 370 is subject to Phosphothreonine. Residues serine 374 and serine 376 each carry the phosphoserine; by GRK6 modification.

Belongs to the G-protein coupled receptor 1 family. Bradykinin receptor subfamily. BDKRB2 sub-subfamily. In terms of assembly, forms a complex with PECAM1 and GNAQ. Interacts with PECAM1.

It localises to the cell membrane. Receptor for bradykinin. It is associated with G proteins that activate a phosphatidylinositol-calcium second messenger system. In Mus musculus (Mouse), this protein is B2 bradykinin receptor (Bdkrb2).